The sequence spans 977 residues: Serine/threonine-protein kinase/endoribonuclease IRE1 (977 aa).

The first 20 residues, 1–20 (MPARWLLLLLALLLPPPGPG), serve as a signal peptide directing secretion. Residues 21–445 (SFGRTSTVTL…EAPVDSMLKD (425 aa)) are Lumenal-facing. A glycan (N-linked (GlcNAc...) asparagine) is linked at Asn-178. A helical transmembrane segment spans residues 446-466 (MATIILSTFLLVGWVAFIITY). Over 467-977 (PLSVHQQRQL…PQPPVIPYAL (511 aa)) the chain is Cytoplasmic. Residues 498 to 559 (FHPHGDLTQD…PSLEQDDEDE (62 aa)) form a disordered region. Over residues 513–551 (SSGPFSESSGTSSPSPSPRASNHSLHPSSSASRAGTSPS) the composition is skewed to low complexity. Residues 571-832 (FCPKDVLGHG…AKHVLKHPFF (262 aa)) enclose the Protein kinase domain. ATP contacts are provided by residues 577-585 (LGHGAEGTI), Lys-599, and 643-645 (ELC). Catalysis depends on Asp-688, which acts as the Proton acceptor; for protein kinase activity. ATP-binding positions include 690-693 (KPHN) and Asp-711. Ser-724 and Ser-729 each carry phosphoserine. A KEN domain is found at 835–963 (LEKQLQFFQD…ERLFQTYYWH (129 aa)). An interacts with hydroxy-aryl-aldehyde inhibitors region spans residues 906–907 (NK).

Belongs to the protein kinase superfamily. Ser/Thr protein kinase family. As to quaternary structure, monomer. Homodimer; disulfide-linked; homodimerization takes place in response to endoplasmic reticulum stress and promotes activation of the kinase and endoribonuclease activities. Dimer formation is driven by hydrophobic interactions within the N-terminal luminal domains and stabilized by disulfide bridges. Interacts (via the luminal region) with DNAJB9/ERdj4; interaction takes place in unstressed cells and promotes recruitment of HSPA5/BiP. Interacts (via the luminal region) with HSPA5/BiP; HSPA5/BiP is a negative regulator of the unfolded protein response (UPR) that prevents homodimerization of ERN1/IRE1 and subsequent activation of the protein. Interaction with HSPA5 also competitively inhibits ERN1 interaction with MANF. Interacts with PDIA6, a negative regulator of the UPR; the interaction is direct and disrupts homodimerization. Interacts with DAB2IP (via PH domain); the interaction occurs in a endoplasmic reticulum stress-induced dependent manner and is required for subsequent recruitment of TRAF2 to ERN1/IRE1. Interacts with TAOK3 and TRAF2. Interacts with RNF13. Interacts with LACC1. Interacts (when unphosphorylated) with DDRGK1; interaction is dependent on UFM1 and takes place in response to endoplasmic reticulum stress, regulating ERN1/IRE1-alpha stability. Interacts (via N-terminus) with P4HB/PDIA1; the interaction is enhanced by phosphorylation of P4HB by FAM20C in response to endoplasmic reticulum stress and results in attenuation of ERN1 activity. Interacts with TMBIM6; this interaction inhibits ERN1 activity. Interacts (via luminal domain) with MANF (via C-terminus); the interaction is decreased in the presence of increasing concentrations of Ca(2+). Mg(2+) is required as a cofactor. Post-translationally, autophosphorylated following homodimerization. Autophosphorylation promotes activation of the endoribonuclease domain. In response to ER stress, phosphorylated at Ser-724, Ser-729 and possibly Ser-726; phosphorylation promotes oligomerization and endoribonuclease activity. Dephosphorylated at Ser-724, Ser-729 and possibly Ser-726 by RPAP2 to abort failed ER-stress adaptation and trigger apoptosis. Phosphorylated at Ser-724; in response to the ER stressor tunicamycin. ADP-ribosylated by PARP16 upon ER stress, which increases both kinase and endonuclease activities. As to expression, expressed in liver (at protein level). Ubiquitously expressed. High levels in thymus, liver and lung. In the brain, preferentially expressed in cortical, hippocampal and olfactory neurons.

It is found in the endoplasmic reticulum membrane. It catalyses the reaction L-seryl-[protein] + ATP = O-phospho-L-seryl-[protein] + ADP + H(+). The enzyme catalyses L-threonyl-[protein] + ATP = O-phospho-L-threonyl-[protein] + ADP + H(+). Its activity is regulated as follows. The kinase domain is activated by trans-autophosphorylation following homodimerization. Kinase activity is required for activation of the endoribonuclease domain. Endoribonuclease activity is specifically inhibited by hydroxy-aryl-aldehydes (HAA) MKC9989, OICR464 and OICR573. Serine/threonine-protein kinase and endoribonuclease that acts as a key sensor for the endoplasmic reticulum unfolded protein response (UPR). In unstressed cells, the endoplasmic reticulum luminal domain is maintained in its inactive monomeric state by binding to the endoplasmic reticulum chaperone HSPA5/BiP. Accumulation of misfolded protein in the endoplasmic reticulum causes release of HSPA5/BiP, allowing the luminal domain to homodimerize, promoting autophosphorylation of the kinase domain and subsequent activation of the endoribonuclease activity. The endoribonuclease activity is specific for XBP1 mRNA and excises 26 nucleotides from XBP1 mRNA. The resulting spliced transcript of XBP1 encodes a transcriptional activator protein that up-regulates expression of UPR target genes. Acts as an upstream signal for ER stress-induced GORASP2-mediated unconventional (ER/Golgi-independent) trafficking of CFTR to cell membrane by modulating the expression and localization of SEC16A. This chain is Serine/threonine-protein kinase/endoribonuclease IRE1, found in Mus musculus (Mouse).